The primary structure comprises 47 residues: PhoP/PhoQ regulator MgrB (47 aa).

A helical transmembrane segment spans residues 6-26; that stretch reads WVILIIVALVCLLLWAQVFNI.

This sequence belongs to the MgrB family. As to quaternary structure, may form homooligomers. Probably interacts with the periplasmic domain of PhoQ.

It is found in the cell inner membrane. Functionally, phoP-regulated transcription is redox-sensitive, being activated when the periplasm becomes more reducing. MgrB acts between DsbA/DsbB and PhoP/PhoQ in this pathway. Represses PhoP/PhoQ signaling, possibly by binding to the periplasmic domain of PhoQ, altering its activity and that of downstream effector PhoP. The polypeptide is PhoP/PhoQ regulator MgrB (Citrobacter koseri (strain ATCC BAA-895 / CDC 4225-83 / SGSC4696)).